Here is a 604-residue protein sequence, read N- to C-terminus: Elongation factor 4 (604 aa).

A tr-type G domain is found at 8-190 (DKIRNFSIIA…AIVNRLPPPR (183 aa)). GTP is bound by residues 20–25 (DHGKST) and 137–140 (NKID).

It belongs to the TRAFAC class translation factor GTPase superfamily. Classic translation factor GTPase family. LepA subfamily.

It localises to the cell inner membrane. The catalysed reaction is GTP + H2O = GDP + phosphate + H(+). Functionally, required for accurate and efficient protein synthesis under certain stress conditions. May act as a fidelity factor of the translation reaction, by catalyzing a one-codon backward translocation of tRNAs on improperly translocated ribosomes. Back-translocation proceeds from a post-translocation (POST) complex to a pre-translocation (PRE) complex, thus giving elongation factor G a second chance to translocate the tRNAs correctly. Binds to ribosomes in a GTP-dependent manner. This Hyphomonas neptunium (strain ATCC 15444) protein is Elongation factor 4.